The primary structure comprises 178 residues: Cytidylate kinase 2 (178 aa).

7 to 15 (GKSGCGNTT) is an ATP binding site.

The protein belongs to the cytidylate kinase family. Type 2 subfamily.

The protein localises to the cytoplasm. The catalysed reaction is CMP + ATP = CDP + ADP. The enzyme catalyses dCMP + ATP = dCDP + ADP. This Borrelia garinii subsp. bavariensis (strain ATCC BAA-2496 / DSM 23469 / PBi) (Borreliella bavariensis) protein is Cytidylate kinase 2.